The chain runs to 46 residues: uncharacterized protein (46 aa).

A helical membrane pass occupies residues 20-42 (MAMIWVVAALVIALVVGTALNYI).

It localises to the membrane. This is an uncharacterized protein from Bacillus subtilis (strain 168).